A 619-amino-acid polypeptide reads, in one-letter code: Long-chain fatty acid transport protein 6 (619 aa).

2 helical membrane-spanning segments follow: residues 22 to 42 (LLFP…RYGI) and 119 to 139 (VHVW…NSNL). 221 to 232 (YIFTSGTTGLPK) provides a ligand contact to AMP.

It belongs to the ATP-dependent AMP-binding enzyme family.

The protein resides in the cell membrane. The protein localises to the sarcolemma. The enzyme catalyses a fatty acid(in) = a fatty acid(out). It catalyses the reaction hexadecanoate(out) = hexadecanoate(in). It carries out the reaction (9Z,12Z)-octadecadienoate(out) = (9Z,12Z)-octadecadienoate(in). The catalysed reaction is (9Z)-octadecenoate(out) = (9Z)-octadecenoate(in). The enzyme catalyses a very long-chain fatty acid + ATP + CoA = a very long-chain fatty acyl-CoA + AMP + diphosphate. It catalyses the reaction tetracosanoate + ATP + CoA = tetracosanoyl-CoA + AMP + diphosphate. It carries out the reaction a long-chain fatty acid + ATP + CoA = a long-chain fatty acyl-CoA + AMP + diphosphate. The catalysed reaction is (9Z)-octadecenoate + ATP + CoA = (9Z)-octadecenoyl-CoA + AMP + diphosphate. The enzyme catalyses (5Z,8Z,11Z,14Z)-eicosatetraenoate + ATP + CoA = (5Z,8Z,11Z,14Z)-eicosatetraenoyl-CoA + AMP + diphosphate. In terms of biological role, mediates the import of long-chain fatty acids (LCFA) into the cell by facilitating their transport at the plasma membrane. Also functions as an acyl-CoA ligase catalyzing the ATP-dependent formation of fatty acyl-CoA using LCFA and very-long-chain fatty acids (VLCFA) as substrates. Plays a pivotal role in regulating available LCFA substrates from exogenous sources in tissues undergoing high levels of beta-oxidation such as the heart. The polypeptide is Long-chain fatty acid transport protein 6 (Slc27a6) (Mus musculus (Mouse)).